The sequence spans 142 residues: Large ribosomal subunit protein uL11 (142 aa).

The protein belongs to the universal ribosomal protein uL11 family. As to quaternary structure, part of the ribosomal stalk of the 50S ribosomal subunit. Interacts with L10 and the large rRNA to form the base of the stalk. L10 forms an elongated spine to which L12 dimers bind in a sequential fashion forming a multimeric L10(L12)X complex. One or more lysine residues are methylated.

Functionally, forms part of the ribosomal stalk which helps the ribosome interact with GTP-bound translation factors. The protein is Large ribosomal subunit protein uL11 of Xylella fastidiosa (strain Temecula1 / ATCC 700964).